The chain runs to 745 residues: Aminopeptidase NAALADL1 (745 aa).

Residues 1-6 (MHWAKI) lie on the Cytoplasmic side of the membrane. A helical; Signal-anchor for type II membrane protein transmembrane segment spans residues 7 to 28 (LGVGIGAAALLGLGIILGHFAI). Topologically, residues 29 to 745 (PKATEPLASS…AATLQPVTDL (717 aa)) are extracellular. Residues asparagine 128, asparagine 141, and asparagine 235 are each glycosylated (N-linked (GlcNAc...) asparagine). Residues threonine 263 and leucine 266 each contribute to the Ca(2+) site. Residues asparagine 279, asparagine 304, and asparagine 350 are each glycosylated (N-linked (GlcNAc...) asparagine). A disulfide bridge connects residues cysteine 301 and cysteine 318. Positions 373 and 383 each coordinate Zn(2+). The active-site Proton donor/acceptor is glutamate 421. Residue glutamate 422 coordinates Zn(2+). Residues glutamate 430 and glutamate 433 each coordinate Ca(2+). Aspartate 450 contributes to the Zn(2+) binding site. N-linked (GlcNAc...) asparagine glycosylation is found at asparagine 456 and asparagine 497. A Zn(2+)-binding site is contributed by histidine 550. 2 N-linked (GlcNAc...) asparagine glycosylation sites follow: asparagine 593 and asparagine 620.

Belongs to the peptidase M28 family. M28B subfamily. In terms of assembly, homodimer. It depends on Zn(2+) as a cofactor. N-glycosylated. Detected on apical villi on the brush border membrane of ileum enterocytes (at protein level). Mainly expressed in the distal small intestine.

The protein resides in the apical cell membrane. Functionally, aminopeptidase with broad substrate specificity. Has lower activity with substrates that have Asp or Glu in the P2' position, or Pro in the P3' position. Lacks activity with substrates that have both Pro in the P3' position and Asp or Glu in the P2' position. Lacks carboxypeptidase activity. Lacks dipeptidyl-peptidase IV type activity. The sequence is that of Aminopeptidase NAALADL1 (Naaladl1) from Rattus norvegicus (Rat).